The chain runs to 309 residues: Homoserine O-succinyltransferase (309 aa).

The Acyl-thioester intermediate role is filled by cysteine 142. Substrate is bound by residues lysine 163 and serine 192. Histidine 235 serves as the catalytic Proton acceptor. Residue glutamate 237 is part of the active site. Position 249 (arginine 249) interacts with substrate.

It belongs to the MetA family. As to quaternary structure, homodimer.

It is found in the cytoplasm. It carries out the reaction L-homoserine + succinyl-CoA = O-succinyl-L-homoserine + CoA. It participates in amino-acid biosynthesis; L-methionine biosynthesis via de novo pathway; O-succinyl-L-homoserine from L-homoserine: step 1/1. Transfers a succinyl group from succinyl-CoA to L-homoserine, forming succinyl-L-homoserine. The chain is Homoserine O-succinyltransferase from Escherichia coli (strain ATCC 8739 / DSM 1576 / NBRC 3972 / NCIMB 8545 / WDCM 00012 / Crooks).